Reading from the N-terminus, the 201-residue chain is MQSSPLLENLIEHLRCLPGVGPKSAQRMAYHLLQRDRSGGMNLAGALTEAMSKIGHCTHCRTFTEEESCAICNNPRRQNSGFLCVVEQPSDIPAIEQTGQFSGRYFVLMGHLSPLDGIGPKEIGLDLLQKRLQHESFYEVILATNPTVEGEATANYIAEMCFQHNIKVSRIAHGIPVGGELETVDGTTLSHSLIGRREIQL.

The C4-type zinc finger occupies 57-72; the sequence is CTHCRTFTEEESCAIC. The Toprim domain maps to 81–176; sequence GFLCVVEQPS…KVSRIAHGIP (96 aa).

This sequence belongs to the RecR family.

May play a role in DNA repair. It seems to be involved in an RecBC-independent recombinational process of DNA repair. It may act with RecF and RecO. This chain is Recombination protein RecR, found in Histophilus somni (strain 2336) (Haemophilus somnus).